The chain runs to 326 residues: uncharacterized protein (326 aa).

28–35 (GPINSGKT) serves as a coordination point for ATP.

It belongs to the archaeal ATPase family.

This is an uncharacterized protein from Pyrococcus abyssi (strain GE5 / Orsay).